Here is a 184-residue protein sequence, read N- to C-terminus: MNIPPEKMHNLEIKKHSRVDLLLLRSSDFHSFRKLQRDVDEMGLLSSTEQHLSGILTTLDNITDQDNTLYCLTQEGELIGMLKIGTKRLYLYNGKDLHCRSCACLLDFYIQRNFRKRGLGLELFNFMLKDKAISPSRLCYDNPSYKLQSFLKKHFSPCALIKQPNNFVIFAEYFGEPEMGPFGQ.

Residues 1–174 (MNIPPEKMHN…NNFVIFAEYF (174 aa)) enclose the N-acetyltransferase domain. Residues 108–121 (FYIQ…GLGL) and 144–153 (SYKLQSFLKK) each bind acetyl-CoA.

This sequence belongs to the acetyltransferase ATAT1 family.

It catalyses the reaction L-lysyl-[alpha-tubulin] + acetyl-CoA = N(6)-acetyl-L-lysyl-[alpha-tubulin] + CoA + H(+). Specifically acetylates 'Lys-40' in alpha-tubulin on the lumenal side of microtubules. Promotes microtubule destabilization and accelerates microtubule dynamics; this activity may be independent of acetylation activity. Acetylates alpha-tubulin with a slow enzymatic rate, due to a catalytic site that is not optimized for acetyl transfer. Enters the microtubule through each end and diffuses quickly throughout the lumen of microtubules. Acetylates only long/old microtubules because of its slow acetylation rate since it does not have time to act on dynamically unstable microtubules before the enzyme is released. The polypeptide is Alpha-tubulin N-acetyltransferase (Plasmodium knowlesi (strain H)).